A 321-amino-acid chain; its full sequence is MKNNIGIIISNVGTPSHPNKKSVKKYLSEFLSDKRVIDISRFFWIPYLHLYFLPLKSYKSVNLYKKIWEKDGSPLMINSLNQRNYLINKFPNFKIELGMRYGDPSICVAIKKMIKIYNVNKLIILPMYPQYSCTTTASVLDSVCEVIKKYRNIPSIIFIRDYADNINYINAITNSIKKSFNKNGIPEMLIMSFHGIPKKYIKDGDDYLKRCNVTKKLVLSKLNFSRKKVIMSFQSKFGNIPWITPITSEVISFLPKKGIKNIQVICPGFSSDCLETLEEIKIQNKKIFKDNGGKKFHYIPALNYSKIHIECLANIIRTHLK.

Fe cation is bound by residues H194 and E275.

The protein belongs to the ferrochelatase family.

It localises to the cytoplasm. It carries out the reaction heme b + 2 H(+) = protoporphyrin IX + Fe(2+). Its pathway is porphyrin-containing compound metabolism; protoheme biosynthesis; protoheme from protoporphyrin-IX: step 1/1. In terms of biological role, catalyzes the ferrous insertion into protoporphyrin IX. The sequence is that of Ferrochelatase from Wigglesworthia glossinidia brevipalpis.